We begin with the raw amino-acid sequence, 402 residues long: Digeranylgeranylglycerophospholipid reductase (402 aa).

Residues Gly-15, Glu-34, Cys-45, Ala-46, Gly-48, Arg-99, Ala-123, Asp-280, Gly-292, and Ile-293 each coordinate FAD.

It belongs to the geranylgeranyl reductase family. DGGGPL reductase subfamily. FAD serves as cofactor.

It catalyses the reaction a 2,3-bis-O-phytanyl-sn-glycerol 1-phospholipid + 8 oxidized 2[4Fe-4S]-[ferredoxin] = a 2,3-bis-O-(geranylgeranyl)-sn-glycerol 1-phospholipid + 8 reduced 2[4Fe-4S]-[ferredoxin] + 16 H(+). It carries out the reaction 2,3-bis-O-(phytanyl)-sn-glycerol 1-phosphate + 8 oxidized 2[4Fe-4S]-[ferredoxin] = 2,3-bis-O-(geranylgeranyl)-sn-glycerol 1-phosphate + 8 reduced 2[4Fe-4S]-[ferredoxin] + 16 H(+). The catalysed reaction is a 2,3-bis-O-phytanyl-sn-glycerol 1-phospholipid + 8 A = a 2,3-bis-O-(geranylgeranyl)-sn-glycerol 1-phospholipid + 8 AH2. The enzyme catalyses CDP-2,3-bis-O-(geranylgeranyl)-sn-glycerol + 8 AH2 = CDP-2,3-bis-O-(phytanyl)-sn-glycerol + 8 A. It catalyses the reaction archaetidylserine + 8 AH2 = 2,3-bis-O-phytanyl-sn-glycero-3-phospho-L-serine + 8 A. It participates in membrane lipid metabolism; glycerophospholipid metabolism. Is involved in the reduction of 2,3-digeranylgeranylglycerophospholipids (unsaturated archaeols) into 2,3-diphytanylglycerophospholipids (saturated archaeols) in the biosynthesis of archaeal membrane lipids. Catalyzes the formation of archaetidic acid (2,3-di-O-phytanyl-sn-glyceryl phosphate) from 2,3-di-O-geranylgeranylglyceryl phosphate (DGGGP) via the hydrogenation of each double bond of the isoprenoid chains. Is also probably able to reduce double bonds of geranyl groups in CDP-2,3-bis-O-(geranylgeranyl)-sn-glycerol and archaetidylserine, thus acting at various stages in the biosynthesis of archaeal membrane lipids. The chain is Digeranylgeranylglycerophospholipid reductase from Methanospirillum hungatei JF-1 (strain ATCC 27890 / DSM 864 / NBRC 100397 / JF-1).